Consider the following 245-residue polypeptide: Dehydrogenase/reductase SDR family member 6 (245 aa).

NAD(+) is bound by residues 16–18 (QGI), D37, and D58. Residue R144 participates in substrate binding. Catalysis depends on Y147, which acts as the Proton acceptor. Residues K151 and 180–184 (VDTPS) contribute to the NAD(+) site. The substrate site is built by R188 and R205.

This sequence belongs to the short-chain dehydrogenases/reductases (SDR) family. In terms of assembly, homotetramer.

The protein resides in the cytoplasm. It carries out the reaction cis-4-hydroxy-L-proline + NAD(+) = 4-oxo-L-proline + NADH + H(+). The enzyme catalyses (R)-3-hydroxybutanoate + NAD(+) = acetoacetate + NADH + H(+). It functions in the pathway amino-acid metabolism. It participates in siderophore biosynthesis. Functionally, NAD(H)-dependent dehydrogenase/reductase with a preference for cyclic substrates. Catalyzes stereoselective conversion of 4-oxo-L-proline to cis-4-hydroxy-L-proline, likely a detoxification mechanism for ketoprolines. Mediates the formation of 2,5-dihydroxybenzoate (2,5-DHBA), a siderophore that chelates free cytoplasmic iron, thereby regulating iron transport and homeostasis while protecting cells against free radical-induced oxidative stress. The iron-siderophore complex is imported into mitochondria, providing an iron source for mitochondrial metabolic processes in particular heme synthesis. May act as a 3-hydroxybutyrate dehydrogenase. In Aquarana catesbeiana (American bullfrog), this protein is Dehydrogenase/reductase SDR family member 6 (bdh2).